The sequence spans 251 residues: Intermembrane phospholipid transport system lipoprotein MlaA (251 aa).

An N-terminal signal peptide occupies residues 1 to 17; the sequence is MKLRLSALALGTTLLVG. Cys18 carries N-palmitoyl cysteine lipidation. Residue Cys18 is the site of S-diacylglycerol cysteine attachment. The tract at residues 228–251 is disordered; that stretch reads GELKPQENPNAQAIQDDLKDIDSE.

Belongs to the MlaA family.

The protein localises to the cell outer membrane. Functionally, involved in a phospholipid transport pathway that maintains lipid asymmetry in the outer membrane by retrograde trafficking of phospholipids from the outer membrane to the inner membrane. Required for intercellular spreading of S.flexneri. The sequence is that of Intermembrane phospholipid transport system lipoprotein MlaA from Shigella flexneri.